A 417-amino-acid chain; its full sequence is Serine--tRNA ligase (417 aa).

Residue 226–228 (TSE) participates in L-serine binding. Residues 257–259 (RRE) and valine 273 each bind ATP. An L-serine-binding site is contributed by glutamate 280. Residue 344–347 (EVTS) participates in ATP binding. L-serine is bound at residue threonine 379.

Belongs to the class-II aminoacyl-tRNA synthetase family. Type-1 seryl-tRNA synthetase subfamily. Homodimer. The tRNA molecule binds across the dimer.

Its subcellular location is the cytoplasm. The catalysed reaction is tRNA(Ser) + L-serine + ATP = L-seryl-tRNA(Ser) + AMP + diphosphate + H(+). It carries out the reaction tRNA(Sec) + L-serine + ATP = L-seryl-tRNA(Sec) + AMP + diphosphate + H(+). It functions in the pathway aminoacyl-tRNA biosynthesis; selenocysteinyl-tRNA(Sec) biosynthesis; L-seryl-tRNA(Sec) from L-serine and tRNA(Sec): step 1/1. Functionally, catalyzes the attachment of serine to tRNA(Ser). Is also able to aminoacylate tRNA(Sec) with serine, to form the misacylated tRNA L-seryl-tRNA(Sec), which will be further converted into selenocysteinyl-tRNA(Sec). The sequence is that of Serine--tRNA ligase from Tropheryma whipplei (strain Twist) (Whipple's bacillus).